The following is a 582-amino-acid chain: TRAF-type zinc finger domain-containing protein 1 (582 aa).

An N-acetylalanine modification is found at A2. The TRAF-type zinc-finger motif lies at 27-103 (IHEIHCQRNI…DLELSILKLK (77 aa)). S191 is subject to Phosphoserine. The disordered stretch occupies residues 217-236 (EQERQERNRGQQPPKEGGEE). Phosphoserine occurs at positions 278, 320, 326, 327, 409, 415, 430, and 470. The segment at 401 to 582 (TEGIPRLDSQ…AGDAEEEEEE (182 aa)) is disordered. Composition is skewed to polar residues over residues 454–471 (PINN…STSG) and 486–495 (LSNSDSQDIQ).

Interacts with MAVS, TICAM1, TRAF1, TRAF2, TRAF3. Interacts with TRAF6.

Negative feedback regulator that controls excessive innate immune responses. Regulates both Toll-like receptor 4 (TLR4) and DDX58/RIG1-like helicases (RLH) pathways. May inhibit the LTR pathway by direct interaction with TRAF6 and attenuation of NF-kappa-B activation. May negatively regulate the RLH pathway downstream from MAVS and upstream of NF-kappa-B and IRF3. In Homo sapiens (Human), this protein is TRAF-type zinc finger domain-containing protein 1 (TRAFD1).